Reading from the N-terminus, the 314-residue chain is Acetaldehyde dehydrogenase 2 (314 aa).

Position 15–18 (15–18 (SGNI)) interacts with NAD(+). The Acyl-thioester intermediate role is filled by Cys-133. NAD(+) is bound by residues 164–172 (SAGPGTRQN) and Asn-289.

Belongs to the acetaldehyde dehydrogenase family.

It carries out the reaction acetaldehyde + NAD(+) + CoA = acetyl-CoA + NADH + H(+). The protein is Acetaldehyde dehydrogenase 2 of Nocardioides sp. (strain ATCC BAA-499 / JS614).